The chain runs to 545 residues: Metal transporter NRAT1 (545 aa).

A run of 12 helical transmembrane segments spans residues 51-71, 84-104, 128-148, 155-175, 188-208, 234-254, 278-298, 333-353, 373-395, 398-418, 437-457, and 474-494; these read FLAH…PSNL, ELLW…TLAA, IFLW…EVLG, ILLK…TLLL, FIIA…LSYL, IALF…ALVL, LAFI…GSIC, VVYA…CTFA, LITR…PSGA, LIIL…IPLL, VVIA…FLVW, and GLIS…VVYL. The tract at residues 516–545 is disordered; that stretch reads EAGGTPVVDASAADEDQPAPYRKDLADASM. The segment covering 536–545 has biased composition (basic and acidic residues); that stretch reads YRKDLADASM.

The protein belongs to the NRAMP (TC 2.A.55) family. Expressed at low levels in roots.

It localises to the cell membrane. Its function is as follows. Metal transporter that transports the trivalent cation aluminum (Al(3+)), but does not seem to transport divalent cations such as iron (Fe(2+)), manganese (Mg(2+)) or Cadmium (Cd(2+)). Involved in Al tolerance by taking up Al in root cells, where it is detoxified by chelation with organic acid anions and sequestration into the vacuoles. The chain is Metal transporter NRAT1 (NRAT1) from Oryza sativa subsp. japonica (Rice).